We begin with the raw amino-acid sequence, 215 residues long: MKFFIDTANINEIKEANELGVLAGVTTNPSLVAKEGVDFHERIREICNVVEGPVSAEVISLEADKMIEEGKELAKIAPNVVVKVPMTTEGLKAVKAFSDLGIRTNVTLVFSAVQALLAARAGATYVSPFLGRLDDIGHNGMDLIRQIAEIFAIHGIETEIIAASVRHSVHVTDAALNGAHIATIPANVIASLVKHPLTDQGIEKFLADWEKTQEK.

Lys83 acts as the Schiff-base intermediate with substrate in catalysis.

Belongs to the transaldolase family. Type 3B subfamily.

The protein resides in the cytoplasm. It catalyses the reaction D-sedoheptulose 7-phosphate + D-glyceraldehyde 3-phosphate = D-erythrose 4-phosphate + beta-D-fructose 6-phosphate. It participates in carbohydrate degradation; pentose phosphate pathway; D-glyceraldehyde 3-phosphate and beta-D-fructose 6-phosphate from D-ribose 5-phosphate and D-xylulose 5-phosphate (non-oxidative stage): step 2/3. Its function is as follows. Transaldolase is important for the balance of metabolites in the pentose-phosphate pathway. In Bacillus cereus (strain ATCC 14579 / DSM 31 / CCUG 7414 / JCM 2152 / NBRC 15305 / NCIMB 9373 / NCTC 2599 / NRRL B-3711), this protein is Probable transaldolase 1.